A 198-amino-acid polypeptide reads, in one-letter code: Probable GTP-binding protein EngB (198 aa).

Residues 21-195 (NFSEVAFLGR…EDIIINQTLG (175 aa)) enclose the EngB-type G domain. GTP-binding positions include 29 to 36 (GRSNVGKS), 56 to 60 (GKTQL), 81 to 84 (DLPG), 151 to 154 (TKCD), and 174 to 176 (VSN). Residues Ser-36 and Thr-58 each contribute to the Mg(2+) site.

This sequence belongs to the TRAFAC class TrmE-Era-EngA-EngB-Septin-like GTPase superfamily. EngB GTPase family. Mg(2+) is required as a cofactor.

Functionally, necessary for normal cell division and for the maintenance of normal septation. The polypeptide is Probable GTP-binding protein EngB (Campylobacter jejuni subsp. jejuni serotype O:23/36 (strain 81-176)).